The primary structure comprises 194 residues: E3 ubiquitin-protein ligase RNF4 (194 aa).

Residues 1-12 (MSTRNPQRKRRG) are compositionally biased toward basic residues. The interval 1–20 (MSTRNPQRKRRGGTVNSRQT) is required for ubiquitination activity. The segment at 1–39 (MSTRNPQRKRRGGTVNSRQTQKRTRETTSTPEVSLETEP) is disordered. The interval 6–65 (PQRKRRGGTVNSRQTQKRTRETTSTPEVSLETEPIELVETVGDEIVDLTCESLEPVVVDL) is mediates interaction with TRPS1. The SUMO interaction motif 1; mediates the binding to polysumoylated substrates signature appears at 40-43 (IELV). The short motif at 50–53 (IVDL) is the SUMO interaction motif 2; mediates the binding to polysumoylated substrates element. An SUMO interaction motif 3; mediates the binding to polysumoylated substrates motif is present at residues 61 to 63 (VVV). The SUMO interaction motif 4; mediates the binding to polysumoylated substrates signature appears at 71 to 74 (VVIV). Ser-98 and Ser-99 each carry phosphoserine. A disordered region spans residues 110–130 (VYVTTHTPRSTKDDGATGPRP). Zn(2+) contacts are provided by Cys-136, Cys-139, Cys-158, His-160, Cys-163, Cys-166, Cys-177, and Cys-180. An RING-type zinc finger spans residues 136-181 (CPICMDGYSEIVQNGRLIVSTECGHVFCSQCLRDSLKNANTCPTCR).

Homodimer (via RING-type zinc finger domain). Interacts with GSC2. Interacts with AR/the androgen receptor and TBP. Interacts with TCF20. Interacts with PATZ1. Interacts with TRPS1; negatively regulates TRPS1 transcriptional repressor activity. Interacts with PML (isoform PML-1, isoform PML-2, isoform PML-3, isoform PML-4, isoform PML-5 and isoform PML-6). Interacts with PRDM1/Blimp-1. Post-translationally, sumoylated; conjugated by one or two SUMO1 moieties. In terms of processing, autoubiquitinated. In terms of tissue distribution, in the embryo, expressed primarily in the developing nervous system with strong expression in the dorsal root ganglia and gonads. Ubiquitously expressed in the adult.

The protein resides in the cytoplasm. Its subcellular location is the nucleus. The protein localises to the PML body. It catalyses the reaction S-ubiquitinyl-[E2 ubiquitin-conjugating enzyme]-L-cysteine + [acceptor protein]-L-lysine = [E2 ubiquitin-conjugating enzyme]-L-cysteine + N(6)-ubiquitinyl-[acceptor protein]-L-lysine.. Its pathway is protein modification; protein ubiquitination. E3 ubiquitin-protein ligase which binds polysumoylated chains covalently attached to proteins and mediates 'Lys-6'-, 'Lys-11'-, 'Lys-48'- and 'Lys-63'-linked polyubiquitination of those substrates and their subsequent targeting to the proteasome for degradation. Regulates the degradation of several proteins including PML and the transcriptional activator PEA3. Involved in chromosome alignment and spindle assembly, it regulates the kinetochore CENPH-CENPI-CENPK complex by targeting polysumoylated CENPI to proteasomal degradation. Regulates the cellular responses to hypoxia and heat shock through degradation of respectively EPAS1 and PARP1. Alternatively, it may also bind DNA/nucleosomes and have a more direct role in the regulation of transcription for instance enhancing basal transcription and steroid receptor-mediated transcriptional activation. Catalyzes ubiquitination of sumoylated PARP1 in response to PARP1 trapping to chromatin, leading to PARP1 removal from chromatin by VCP/p97. In Mus musculus (Mouse), this protein is E3 ubiquitin-protein ligase RNF4.